A 347-amino-acid polypeptide reads, in one-letter code: Phosphoribosylformylglycinamidine cyclo-ligase (347 aa).

This sequence belongs to the AIR synthase family.

The protein resides in the cytoplasm. The enzyme catalyses 2-formamido-N(1)-(5-O-phospho-beta-D-ribosyl)acetamidine + ATP = 5-amino-1-(5-phospho-beta-D-ribosyl)imidazole + ADP + phosphate + H(+). It participates in purine metabolism; IMP biosynthesis via de novo pathway; 5-amino-1-(5-phospho-D-ribosyl)imidazole from N(2)-formyl-N(1)-(5-phospho-D-ribosyl)glycinamide: step 2/2. The chain is Phosphoribosylformylglycinamidine cyclo-ligase from Yersinia pseudotuberculosis serotype O:1b (strain IP 31758).